A 158-amino-acid chain; its full sequence is 2-C-methyl-D-erythritol 2,4-cyclodiphosphate synthase (158 aa).

A divalent metal cation is bound by residues Asp9 and His11. Residues 9 to 11 (DVH) and 35 to 36 (HS) contribute to the 4-CDP-2-C-methyl-D-erythritol 2-phosphate site. His43 is an a divalent metal cation binding site. Residues 57 to 59 (DLG), 62 to 66 (FPDTD), 133 to 136 (TTTE), Phe140, and Arg143 each bind 4-CDP-2-C-methyl-D-erythritol 2-phosphate.

The protein belongs to the IspF family. In terms of assembly, homotrimer. The cofactor is a divalent metal cation.

The catalysed reaction is 4-CDP-2-C-methyl-D-erythritol 2-phosphate = 2-C-methyl-D-erythritol 2,4-cyclic diphosphate + CMP. It functions in the pathway isoprenoid biosynthesis; isopentenyl diphosphate biosynthesis via DXP pathway; isopentenyl diphosphate from 1-deoxy-D-xylulose 5-phosphate: step 4/6. Functionally, involved in the biosynthesis of isopentenyl diphosphate (IPP) and dimethylallyl diphosphate (DMAPP), two major building blocks of isoprenoid compounds. Catalyzes the conversion of 4-diphosphocytidyl-2-C-methyl-D-erythritol 2-phosphate (CDP-ME2P) to 2-C-methyl-D-erythritol 2,4-cyclodiphosphate (ME-CPP) with a corresponding release of cytidine 5-monophosphate (CMP). The chain is 2-C-methyl-D-erythritol 2,4-cyclodiphosphate synthase from Desulfitobacterium hafniense (strain DSM 10664 / DCB-2).